A 599-amino-acid polypeptide reads, in one-letter code: Nucleosomal histone kinase 1 (599 aa).

Residues 47 to 328 enclose the Protein kinase domain; the sequence is WRIGPSIGVG…PDYDKCRSWF (282 aa). ATP contacts are provided by residues 53-61 and lysine 77; that span reads IGVGGFGEI. The Proton acceptor role is filled by aspartate 183. 2 disordered regions span residues 340-507 and 532-599; these read NGDL…PQPR and RKKK…KYQG. Polar residues predominate over residues 349-361; the sequence is PQTSSNNNLSPPG. Phosphoserine occurs at positions 376, 381, 382, 388, and 390. Over residues 435 to 448 the composition is skewed to basic and acidic residues; the sequence is VKTEPKSTPRERAT. Serine 483 carries the post-translational modification Phosphoserine. Low complexity predominate over residues 546–558; sequence SRTPSSRSALASS. 2 positions are modified to phosphoserine: serine 564 and serine 586. Residue threonine 589 is modified to Phosphothreonine.

This sequence belongs to the protein kinase superfamily. CK1 Ser/Thr protein kinase family. VRK subfamily. In terms of assembly, may interact with Unc-89 (via protein kinase domain 1). Interacts with L(2)gl. It depends on Mg(2+) as a cofactor. Phosphorylated during mitosis and female meiosis. As to expression, expressed in ovaries (at protein level). Expressed in indirect flight muscle (IFM) (at protein level).

It localises to the cytoplasm. It is found in the nucleus. The protein localises to the chromosome. Its subcellular location is the myofibril. The protein resides in the sarcomere. It localises to the z line. It is found in the m line. The enzyme catalyses L-seryl-[protein] + ATP = O-phospho-L-seryl-[protein] + ADP + H(+). It carries out the reaction L-threonyl-[protein] + ATP = O-phospho-L-threonyl-[protein] + ADP + H(+). In terms of biological role, serine/threonine-protein kinase involved in somatic mitosis and female meiosis. Required for spindle organization in mitosis, and for the establishment or maintenance of meiosis-specific chromosomal configurations, including the prophase I karyosome and the metaphase I spindle. Specifically phosphorylates nucleosomal H2A on 'Thr-119'. Required for the development and organization of indirect flight muscle sarcomeres by regulating the formation of M line and H zone and the correct assembly of thick and thin filaments in the sarcomere. The protein is Nucleosomal histone kinase 1 (ball) of Drosophila melanogaster (Fruit fly).